The following is a 260-amino-acid chain: uncharacterized protein (260 aa).

The N-terminal stretch at 1 to 22 is a signal peptide; it reads MGYIKRIGLYISIFILIVMVAG. Cys23 carries the N-palmitoyl cysteine lipid modification. Cys23 carries S-diacylglycerol cysteine lipidation.

Belongs to the staphylococcal tandem lipoprotein family.

Its subcellular location is the cell membrane. This is an uncharacterized protein from Staphylococcus aureus (strain bovine RF122 / ET3-1).